We begin with the raw amino-acid sequence, 1365 residues long: ATP-dependent RNA helicase DHX29 (1365 aa).

The span at 1 to 10 shows a compositional bias: basic residues; the sequence is MGGKNKKHKA. Disordered stretches follow at residues 1 to 74, 174 to 222, and 235 to 257; these read MGGK…NDSG, SQEF…EETT, and AEQQ…EKFD. Low complexity-rich tracts occupy residues 11–36 and 43–53; these read PGAA…VGEA and ARPAPAVPTGA. Phosphoserine is present on residues S69, S190, and S198. Polar residues predominate over residues 187–203; the sequence is KFQSVQIQATLSPPQQT. Basic and acidic residues predominate over residues 206-222; the sequence is KRQEEDPKIKPKKEETT. Residues 281–308 adopt a coiled-coil conformation; sequence LEKNKQGQKEAQEKIRKFQREMETLEDH. The interval 500 to 524 is disordered; sequence QQQQQQQQRPESEKGGSEDPEESWE. Residues 581–754 form the Helicase ATP-binding domain; it reads VETLKRHRVV…FTHCPILRIS (174 aa). Position 594–601 (594–601) interacts with ATP; it reads GETGSGKS. Positions 701 to 704 match the DEAH box motif; it reads DEVH. The Helicase C-terminal domain maps to 848 to 1025; it reads LILELLVYLD…ELCLHIMKCD (178 aa).

This sequence belongs to the DEAD box helicase family. DEAH subfamily. Part of the 43S pre-initiation complex (PIC) that contains at least Met-tRNA, EIF1, EIF1A (EIF1AX or EIF1AY), EIF2S1, EIF2S2, EIF2S3, EIF3A, EIF3B, EIF3C, EIF3D, EIF3E, EIF3F, EIF3G, EIF3H, EIF3I, EIF3J, EIF3K, EIF3L, EIF3M, DHX29 and the 40S ribosomal subunit.

It is found in the cytoplasm. It catalyses the reaction ATP + H2O = ADP + phosphate + H(+). In terms of biological role, ATP-binding RNA helicase involved in translation initiation. Part of the 43S pre-initiation complex that is required for efficient initiation on mRNAs of higher eukaryotes with structured 5'-UTRs by promoting efficient NTPase-dependent 48S complex formation. Specifically binds to the 40S ribosome near the mRNA entrance. Does not possess a processive helicase activity. The polypeptide is ATP-dependent RNA helicase DHX29 (Mus musculus (Mouse)).